A 74-amino-acid polypeptide reads, in one-letter code: Somatostatin-2 (74 aa).

Positions 1 to 46 are excised as a propeptide; sequence ARGAGLLSQDWSAVEDLLAQMSLPEADAQREAEVVSVATGGRLNLE. C63 and C74 are oxidised to a cystine.

The protein belongs to the somatostatin family.

The protein resides in the secreted. Somatostatin inhibits the release of somatotropin. The chain is Somatostatin-2 (sst2) from Myoxocephalus scorpius (Shorthorn sculpin).